Here is a 229-residue protein sequence, read N- to C-terminus: Synaptogyrin-3 (229 aa).

Met-1 carries the N-acetylmethionine modification. An MARVEL domain is found at 20-172; it reads FARRPQTLLR…LTVKALQRFR (153 aa). 4 helical membrane-spanning segments follow: residues 30–50, 70–90, 105–125, and 148–168; these read VVSWVFSIAVFGPIVNEGYVN, FGVVLGLGAFIACVAFLLLDV, VLLDLGFSGVWSFLWFVGFCF, and AAIAFSFFSILSWVALTVKAL. Positions 209–223 are enriched in polar residues; sequence QSPPFTETLDTSSKG. The interval 209-229 is disordered; the sequence is QSPPFTETLDTSSKGYQVPAY.

It belongs to the synaptogyrin family. As to quaternary structure, interacts (via N-terminus) with SLC6A3 (via N-terminus). May interact with VMAT2. In terms of tissue distribution, specifically expressed in brain. Found in the brain across the dorsal and ventral corpus striatum as well as in the cortex.

The protein resides in the cytoplasmic vesicle. It localises to the secretory vesicle. The protein localises to the synaptic vesicle membrane. Its subcellular location is the synapse. Functionally, may play a role in regulated exocytosis. May indirectly regulate the activity of the plasma membrane dopamine transporter SLC6A3 and thereby regulate dopamine transport back from the synaptic cleft into the presynaptic terminal. In Mus musculus (Mouse), this protein is Synaptogyrin-3.